We begin with the raw amino-acid sequence, 246 residues long: tRNA pseudouridine synthase A (246 aa).

The active-site Nucleophile is D52. Y111 lines the substrate pocket.

This sequence belongs to the tRNA pseudouridine synthase TruA family. As to quaternary structure, homodimer.

It carries out the reaction uridine(38/39/40) in tRNA = pseudouridine(38/39/40) in tRNA. In terms of biological role, formation of pseudouridine at positions 38, 39 and 40 in the anticodon stem and loop of transfer RNAs. This is tRNA pseudouridine synthase A from Borreliella burgdorferi (strain ATCC 35210 / DSM 4680 / CIP 102532 / B31) (Borrelia burgdorferi).